We begin with the raw amino-acid sequence, 481 residues long: GTPase Der (481 aa).

EngA-type G domains lie at 47-210 (PVLA…PDVS) and 221-394 (RRVA…ESWE). GTP contacts are provided by residues 53-60 (GRPNVGKS), 100-104 (DTGGW), 162-165 (NKVD), 227-234 (GRPNVGKS), 274-278 (DTAGI), and 339-342 (NKWD). The KH-like domain maps to 395–477 (TRIPTGKFNA…PIVLNMRVRE (83 aa)).

It belongs to the TRAFAC class TrmE-Era-EngA-EngB-Septin-like GTPase superfamily. EngA (Der) GTPase family. Associates with the 50S ribosomal subunit.

Its function is as follows. GTPase that plays an essential role in the late steps of ribosome biogenesis. This is GTPase Der from Leifsonia xyli subsp. xyli (strain CTCB07).